The primary structure comprises 323 residues: Ethanolamine-phosphate cytidylyltransferase (323 aa).

This sequence belongs to the cytidylyltransferase family.

It localises to the cytoplasm. The protein localises to the nucleus. The catalysed reaction is phosphoethanolamine + CTP + H(+) = CDP-ethanolamine + diphosphate. It participates in phospholipid metabolism; phosphatidylethanolamine biosynthesis; phosphatidylethanolamine from ethanolamine: step 2/3. Functionally, ethanolamine-phosphate cytidylyltransferase which catalyzes the second step of phosphatidylethanolamine biosynthesis. Involved in the maintenance of plasma membrane and required for proper sporulation. This chain is Ethanolamine-phosphate cytidylyltransferase, found in Saccharomyces cerevisiae (strain ATCC 204508 / S288c) (Baker's yeast).